A 219-amino-acid polypeptide reads, in one-letter code: uncharacterized protein (219 aa).

A signal peptide spans 1–26 (MNDRGVPNSRTGPSLLALLPAANSYA). Disordered stretches follow at residues 36–57 (AVGV…TRGG) and 88–219 (SGLG…GLCE). The segment covering 127–173 (LSPPSALGSSPAGRGRPAPAIAAAKSSPLSASAAPGRCGARPRAPSR) has biased composition (low complexity). Over residues 176-202 (RERRPRGNPRAPLRRGARGRRRSHTRG) the composition is skewed to basic residues.

This is an uncharacterized protein from Gallid herpesvirus 2 (strain Chicken/Md5/ATCC VR-987) (GaHV-2).